We begin with the raw amino-acid sequence, 76 residues long: Kappa-scoloptoxin(15)-Ssd3a (76 aa).

An N-terminal signal peptide occupies residues 1–23 (MEGKIIFICFLVVLLTLPELISS).

In terms of processing, contains 2 disulfide bonds. Expressed by the venom gland.

It is found in the secreted. Functionally, acts as a voltage-gated potassium channel inhibitor. This chain is Kappa-scoloptoxin(15)-Ssd3a, found in Scolopendra dehaani (Thai centipede).